A 353-amino-acid polypeptide reads, in one-letter code: MLDFSLFVWYHRLCNYTKYLFRIIRFWTIKRKELSFMEALKYPPILEEFLNYFSTVKARSPNTIKAYAYDLILFFRFLKKRRGKVSDDIPFDEIDISDVDIDLIESVDLNDLYAYLSFVTNERSNTPPARARKVASLRSFYNYLYRKAKVISKNPTQELESPKLSVRHPIYLTLEESKKLLNSIDGPFKERDYAIITLFLNCGLRVSELVNINLDDIKEDKLTVIGKGNKQRTIYLNEACIKAISDYLKVRPKEGVKDKKALFLSKRLKRISVKTVQYLVKKHLKHANLEGKKYSAHKLRHTAATLMYRYGNVDIRTLQKLLGHSNVSTTQIYTHVDDSQLREAVNKNPLSQE.

The Core-binding (CB) domain maps to 40-145 (LKYPPILEEF…SLRSFYNYLY (106 aa)). The Tyr recombinase domain maps to 167–346 (RHPIYLTLEE…DDSQLREAVN (180 aa)). Active-site residues include R205, K227, H297, R300, and H324. Y333 serves as the catalytic O-(3'-phospho-DNA)-tyrosine intermediate.

The protein belongs to the 'phage' integrase family.

The protein resides in the cytoplasm. Its function is as follows. Site-specific tyrosine recombinase, which acts by catalyzing the cutting and rejoining of the recombining DNA molecules. This is Tyrosine recombinase XerC (xerC) from Caldanaerobacter subterraneus subsp. tengcongensis (strain DSM 15242 / JCM 11007 / NBRC 100824 / MB4) (Thermoanaerobacter tengcongensis).